The primary structure comprises 94 residues: DNA-directed RNA polymerase subunit omega (94 aa).

The protein belongs to the RNA polymerase subunit omega family. In terms of assembly, the RNAP catalytic core consists of 2 alpha, 1 beta, 1 beta' and 1 omega subunit. When a sigma factor is associated with the core the holoenzyme is formed, which can initiate transcription.

It carries out the reaction RNA(n) + a ribonucleoside 5'-triphosphate = RNA(n+1) + diphosphate. Functionally, promotes RNA polymerase assembly. Latches the N- and C-terminal regions of the beta' subunit thereby facilitating its interaction with the beta and alpha subunits. The sequence is that of DNA-directed RNA polymerase subunit omega from Bifidobacterium longum subsp. infantis (strain ATCC 15697 / DSM 20088 / JCM 1222 / NCTC 11817 / S12).